Reading from the N-terminus, the 213-residue chain is Octanoyltransferase (213 aa).

Positions 32–207 (NSTLDEIWLV…NILALLNNPD (176 aa)) constitute a BPL/LPL catalytic domain. Substrate contacts are provided by residues 71–78 (RGGQVTYH), 138–140 (SLG), and 151–153 (GLA). The active-site Acyl-thioester intermediate is C169.

It belongs to the LipB family.

It is found in the cytoplasm. It catalyses the reaction octanoyl-[ACP] + L-lysyl-[protein] = N(6)-octanoyl-L-lysyl-[protein] + holo-[ACP] + H(+). It participates in protein modification; protein lipoylation via endogenous pathway; protein N(6)-(lipoyl)lysine from octanoyl-[acyl-carrier-protein]: step 1/2. Catalyzes the transfer of endogenously produced octanoic acid from octanoyl-acyl-carrier-protein onto the lipoyl domains of lipoate-dependent enzymes. Lipoyl-ACP can also act as a substrate although octanoyl-ACP is likely to be the physiological substrate. The sequence is that of Octanoyltransferase from Shigella flexneri serotype 5b (strain 8401).